The following is a 175-amino-acid chain: Translation initiation factor IF-3 (175 aa).

It belongs to the IF-3 family. In terms of assembly, monomer.

It is found in the cytoplasm. Functionally, IF-3 binds to the 30S ribosomal subunit and shifts the equilibrium between 70S ribosomes and their 50S and 30S subunits in favor of the free subunits, thus enhancing the availability of 30S subunits on which protein synthesis initiation begins. In Staphylococcus aureus (strain NCTC 8325 / PS 47), this protein is Translation initiation factor IF-3.